Reading from the N-terminus, the 282-residue chain is Protein-export membrane protein SecF (282 aa).

6 helical membrane passes run 16–36 (MVAL…FNTV), 126–146 (QAIW…FVAF), 148–168 (IFIP…ITAA), 169–189 (FMDV…LMLI), 221–241 (GIIM…VFSL), and 253–273 (VLII…AGLL).

Belongs to the SecD/SecF family. SecF subfamily. As to quaternary structure, part of the protein translocation apparatus. Forms a complex with SecD.

The protein resides in the cell membrane. Its function is as follows. Involved in protein export. The polypeptide is Protein-export membrane protein SecF (Methanolacinia petrolearia (strain DSM 11571 / OCM 486 / SEBR 4847) (Methanoplanus petrolearius)).